The sequence spans 129 residues: MRSSSPSQPPSIKKAHRQAKKRAIRRRRIDLDCGCSIYFHIDCAGHGFTHRGAHHCTSGREWRVYLGDRKSPLFQDKPSRGHAIHQDQDIQRPNPVQPQPQESIGSPQSIPELPSLDDIDDSFWVELFS.

Residues 1–12 (MRSSSPSQPPSI) show a composition bias toward low complexity. A disordered region spans residues 1 to 23 (MRSSSPSQPPSIKKAHRQAKKRA). The segment covering 13 to 23 (KKAHRQAKKRA) has biased composition (basic residues). Positions 13-28 (KKAHRQAKKRAIRRRR) match the Nuclear localization signal motif. The segment at 33-50 (CGCSIYFHIDCAGHGFTH) is a zinc-finger region. The disordered stretch occupies residues 73–117 (LFQDKPSRGHAIHQDQDIQRPNPVQPQPQESIGSPQSIPELPSLD). Residues 99–109 (QPQESIGSPQS) show a composition bias toward polar residues. The transactivation stretch occupies residues 115-129 (SLDDIDDSFWVELFS).

Belongs to the geminiviridae transcriptional activator protein family. Monomer. Homodimer. Homooligomer. Self-interaction correlates with nuclear localization and efficient activation of transcription. Monomers suppress local silencing by interacting with and inactivating host adenosine kinase 2 (ADK2) in the cytoplasm. Interacts with and inhibits host SNF1 kinase. Binds to ssDNA. In terms of processing, phosphorylated.

It localises to the host nucleus. It is found in the host cytoplasm. Functionally, strong activator of the late viral genes promoters. Enhances the expression of the capsid protein and nuclear shuttle protein. Acts as a suppressor of RNA-mediated gene silencing, also known as post-transcriptional gene silencing (PTGS), a mechanism of plant viral defense that limits the accumulation of viral RNAs. Suppresses the host RNA silencing by inhibiting adenosine kinase 2 (ADK2), a kinase involved in a general methylation pathway. Also suppresses the host basal defense by interacting with and inhibiting SNF1 kinase, a key regulator of cell metabolism implicated in innate antiviral defense. Determines pathogenicity. The protein is Transcriptional activator protein of Solanum tuberosum (Potato).